We begin with the raw amino-acid sequence, 243 residues long: 3-deoxy-manno-octulosonate cytidylyltransferase (243 aa).

It belongs to the KdsB family.

It is found in the cytoplasm. It catalyses the reaction 3-deoxy-alpha-D-manno-oct-2-ulosonate + CTP = CMP-3-deoxy-beta-D-manno-octulosonate + diphosphate. Its pathway is nucleotide-sugar biosynthesis; CMP-3-deoxy-D-manno-octulosonate biosynthesis; CMP-3-deoxy-D-manno-octulosonate from 3-deoxy-D-manno-octulosonate and CTP: step 1/1. It functions in the pathway bacterial outer membrane biogenesis; lipopolysaccharide biosynthesis. Functionally, activates KDO (a required 8-carbon sugar) for incorporation into bacterial lipopolysaccharide in Gram-negative bacteria. This Bartonella bacilliformis (strain ATCC 35685 / KC583 / Herrer 020/F12,63) protein is 3-deoxy-manno-octulosonate cytidylyltransferase.